Here is a 284-residue protein sequence, read N- to C-terminus: Homeobox protein SMOX-5 (284 aa).

Residues 37-96 constitute a DNA-binding region (homeobox); that stretch reads RRKTRTTFSNCQLNELENNFNRQRYLTPTDRDRIAKHLGLTNTQVITWFQNRRAKLKREA. Residues 117 to 172 form a disordered region; the sequence is LSLSDHDHEETQIDDENEQGDNNNDDDGDDNDVEEDDGEEQEKNHTKYLTQPPSIS. Over residues 128–156 the composition is skewed to acidic residues; that stretch reads QIDDENEQGDNNNDDDGDDNDVEEDDGEE.

The protein resides in the nucleus. The polypeptide is Homeobox protein SMOX-5 (SMOX-5) (Schistosoma mansoni (Blood fluke)).